The following is a 363-amino-acid chain: MIIDTTEIETINSFSKLESLKEVYGIIWMLVPIVTLVLGITIGVLVIVWLEREISAGIQQRIGPEYAGPLGILQALADGTKLLLKENLIPSTGDTRLFSIGPSIAVISIFLSYSVIPFGDHLVLADLSIGVFFWIAISSIAPVGLLMSGYGSNNKYSFLGGLRAAAQSISYEIPLALCVLSISLLSNSSSTVDIVEAQSKYGFWGWNLWRQPIGFIVFLISSLAECERLPFDLPEAEEELVAGYQTEYSGIKFGLFYIASYLNLLVSSLFVTVLYLGGWNLSIPYIFVPELFGINKGGKVFGTLIGIFITLAKTYLFLFIPIATRWTLPRLRMDQLLNLGWKFLLPISLGNLLLTTSSQLLSL.

Transmembrane regions (helical) follow at residues 30-50 (LVPI…IVWL), 98-118 (FSIG…VIPF), 127-147 (LSIG…GLLM), 165-185 (AAQS…ISLL), 203-223 (FWGW…ISSL), 248-268 (YSGI…LVSS), 300-320 (VFGT…FLFI), and 336-356 (LLNL…LLTT).

Belongs to the complex I subunit 1 family. As to quaternary structure, NDH is composed of at least 16 different subunits, 5 of which are encoded in the nucleus.

The protein localises to the plastid. Its subcellular location is the chloroplast thylakoid membrane. The enzyme catalyses a plastoquinone + NADH + (n+1) H(+)(in) = a plastoquinol + NAD(+) + n H(+)(out). It catalyses the reaction a plastoquinone + NADPH + (n+1) H(+)(in) = a plastoquinol + NADP(+) + n H(+)(out). In terms of biological role, NDH shuttles electrons from NAD(P)H:plastoquinone, via FMN and iron-sulfur (Fe-S) centers, to quinones in the photosynthetic chain and possibly in a chloroplast respiratory chain. The immediate electron acceptor for the enzyme in this species is believed to be plastoquinone. Couples the redox reaction to proton translocation, and thus conserves the redox energy in a proton gradient. This chain is NAD(P)H-quinone oxidoreductase subunit 1, chloroplastic, found in Solanum bulbocastanum (Wild potato).